Consider the following 323-residue polypeptide: Aspartate carbamoyltransferase catalytic subunit (323 aa).

Carbamoyl phosphate contacts are provided by Arg-71 and Thr-72. Lys-99 is an L-aspartate binding site. Carbamoyl phosphate-binding residues include Arg-121, His-151, and Gln-154. Positions 184 and 239 each coordinate L-aspartate. Residues Gly-280 and Pro-281 each contribute to the carbamoyl phosphate site.

It belongs to the aspartate/ornithine carbamoyltransferase superfamily. ATCase family. Heterododecamer (2C3:3R2) of six catalytic PyrB chains organized as two trimers (C3), and six regulatory PyrI chains organized as three dimers (R2).

It carries out the reaction carbamoyl phosphate + L-aspartate = N-carbamoyl-L-aspartate + phosphate + H(+). The protein operates within pyrimidine metabolism; UMP biosynthesis via de novo pathway; (S)-dihydroorotate from bicarbonate: step 2/3. Its function is as follows. Catalyzes the condensation of carbamoyl phosphate and aspartate to form carbamoyl aspartate and inorganic phosphate, the committed step in the de novo pyrimidine nucleotide biosynthesis pathway. This chain is Aspartate carbamoyltransferase catalytic subunit, found in Ralstonia pickettii (strain 12J).